We begin with the raw amino-acid sequence, 89 residues long: ATP synthase subunit c (89 aa).

A run of 2 helical transmembrane segments spans residues 3–23 (IILG…AIGA) and 53–73 (FILA…ALMF).

This sequence belongs to the ATPase C chain family. In terms of assembly, F-type ATPases have 2 components, F(1) - the catalytic core - and F(0) - the membrane proton channel. F(1) has five subunits: alpha(3), beta(3), gamma(1), delta(1), epsilon(1). F(0) has three main subunits: a(1), b(2) and c(10-14). The alpha and beta chains form an alternating ring which encloses part of the gamma chain. F(1) is attached to F(0) by a central stalk formed by the gamma and epsilon chains, while a peripheral stalk is formed by the delta and b chains.

The protein localises to the cell inner membrane. F(1)F(0) ATP synthase produces ATP from ADP in the presence of a proton or sodium gradient. F-type ATPases consist of two structural domains, F(1) containing the extramembraneous catalytic core and F(0) containing the membrane proton channel, linked together by a central stalk and a peripheral stalk. During catalysis, ATP synthesis in the catalytic domain of F(1) is coupled via a rotary mechanism of the central stalk subunits to proton translocation. Its function is as follows. Key component of the F(0) channel; it plays a direct role in translocation across the membrane. A homomeric c-ring of between 10-14 subunits forms the central stalk rotor element with the F(1) delta and epsilon subunits. This Verminephrobacter eiseniae (strain EF01-2) protein is ATP synthase subunit c.